A 163-amino-acid chain; its full sequence is MITRGRVWRFGDNVSTDTITPGRYNLTKDPEELARIAFIEARPEFSREVKPGDVVVGGRNFGIGSSRESAALSLKAAGVAGVIAESFGRIFYRNAVNLGLPLLVGDTSGLRDGEVVEVNWRTGEVRTENGVFHFKPLDGFLLRIVEEGGILSFIARRGDLCIE.

This sequence belongs to the LeuD family. LeuD type 2 subfamily. Heterodimer of LeuC and LeuD.

It carries out the reaction (2R,3S)-3-isopropylmalate = (2S)-2-isopropylmalate. It functions in the pathway amino-acid biosynthesis; L-leucine biosynthesis; L-leucine from 3-methyl-2-oxobutanoate: step 2/4. Catalyzes the isomerization between 2-isopropylmalate and 3-isopropylmalate, via the formation of 2-isopropylmaleate. This chain is 3-isopropylmalate dehydratase small subunit, found in Thermococcus kodakarensis (strain ATCC BAA-918 / JCM 12380 / KOD1) (Pyrococcus kodakaraensis (strain KOD1)).